Consider the following 61-residue polypeptide: Large ribosomal subunit protein bL32 (61 aa).

The span at 1 to 22 (MAVPKKKTSKSRRDMRRSHHAL) shows a compositional bias: basic residues. The disordered stretch occupies residues 1–27 (MAVPKKKTSKSRRDMRRSHHALKPSAY).

This sequence belongs to the bacterial ribosomal protein bL32 family.

This Rhodospirillum rubrum (strain ATCC 11170 / ATH 1.1.1 / DSM 467 / LMG 4362 / NCIMB 8255 / S1) protein is Large ribosomal subunit protein bL32.